Consider the following 364-residue polypeptide: Oxidized low-density lipoprotein receptor 1 (364 aa).

Positions Met1 to Lys21 are disordered. At Met1–Ser31 the chain is on the cytoplasmic side. The helical; Signal-anchor for type II membrane protein transmembrane segment at Thr32 to Val54 threads the bilayer. S-palmitoyl cysteine attachment occurs at residues Cys35 and Cys45. A neck region spans residues Gln55 to His242. At Gln55–Gln364 the chain is on the extracellular side. N-linked (GlcNAc...) asparagine glycans are attached at residues Asn72, Asn92, and Asn138. Residues Gln83 to Gly233 adopt a coiled-coil conformation. Tandem repeats lie at residues Glu96 to Glu141, Glu142 to Glu187, and Glu188 to Gly233. Intrachain disulfides connect Cys235-Cys246, Cys262-Cys354, and Cys333-Cys346. A C-type lectin domain is found at His242–Gln355.

As to quaternary structure, homodimer; disulfide-linked. May form a hexamer composed of 3 homodimers. Interacts with HSP70. In terms of processing, N-glycosylated. Predominantly expressed in lung and at lower level in kidney. Expressed in macrophages but not in vascular smooth muscle cells.

The protein localises to the cell membrane. It localises to the membrane raft. It is found in the secreted. Functionally, receptor that mediates the recognition, internalization and degradation of oxidatively modified low density lipoprotein (oxLDL) by vascular endothelial cells. OxLDL is a marker of atherosclerosis that induces vascular endothelial cell activation and dysfunction, resulting in pro-inflammatory responses, pro-oxidative conditions and apoptosis. Its association with oxLDL induces the activation of NF-kappa-B through an increased production of intracellular reactive oxygen and a variety of pro-atherogenic cellular responses including a reduction of nitric oxide (NO) release, monocyte adhesion and apoptosis. In addition to binding oxLDL, it acts as a receptor for the HSP70 protein involved in antigen cross-presentation to naive T-cells in dendritic cells, thereby participating in cell-mediated antigen cross-presentation. Also involved in inflammatory process, by acting as a leukocyte-adhesion molecule at the vascular interface in endotoxin-induced inflammation. Also acts as a receptor for advanced glycation end (AGE) products, activated platelets, monocytes, apoptotic cells and both Gram-negative and Gram-positive bacteria. The protein is Oxidized low-density lipoprotein receptor 1 (Olr1) of Rattus norvegicus (Rat).